The sequence spans 427 residues: Serine--tRNA ligase (427 aa).

T231–E233 lines the L-serine pocket. R262–E264 contributes to the ATP binding site. E285 contacts L-serine. ATP is bound at residue E349 to S352. Residue S385 participates in L-serine binding.

It belongs to the class-II aminoacyl-tRNA synthetase family. Type-1 seryl-tRNA synthetase subfamily. Homodimer. The tRNA molecule binds across the dimer.

Its subcellular location is the cytoplasm. The enzyme catalyses tRNA(Ser) + L-serine + ATP = L-seryl-tRNA(Ser) + AMP + diphosphate + H(+). It catalyses the reaction tRNA(Sec) + L-serine + ATP = L-seryl-tRNA(Sec) + AMP + diphosphate + H(+). It participates in aminoacyl-tRNA biosynthesis; selenocysteinyl-tRNA(Sec) biosynthesis; L-seryl-tRNA(Sec) from L-serine and tRNA(Sec): step 1/1. Functionally, catalyzes the attachment of serine to tRNA(Ser). Is also able to aminoacylate tRNA(Sec) with serine, to form the misacylated tRNA L-seryl-tRNA(Sec), which will be further converted into selenocysteinyl-tRNA(Sec). The polypeptide is Serine--tRNA ligase (Brucella canis (strain ATCC 23365 / NCTC 10854 / RM-666)).